A 378-amino-acid chain; its full sequence is MPAQPAQENAQDADDAQANATMETRVAGQGQPKRVGRWTLAQLRQTDGIIPSQAGWNKGDSQKLMTNFGTPRNTQTRVKSENLAEIPEEVLMRTHGEVRLQSGTNKFESQRGMTGFGTGRDVCREGVHVNQAPSDLQPLDEEKIRLSDGIVRLQAGTNKYDSQKGMTGFGTARRETTKMTDSKHPDYDHERPDQSEIPLQAGTNKFASQKGMIGFGTSRRETTKICDSAHPEYDPESSIDSSTIPSQMGSNKYASQKGMTGFGQPRWEVLDPSISWQNRKSQGMVRLQSGTNRFASQQGMTGFGTPRNTTYEAEAGELPYEDMKKSETVIPSQAGWNRGDSQKGMTGFGAPRDVKGKHLKRIWELEYPEEAEASLDRL.

Residues 1–20 (MPAQPAQENAQDADDAQANA) show a composition bias toward low complexity. The tract at residues 1–35 (MPAQPAQENAQDADDAQANATMETRVAGQGQPKRV) is disordered. Calponin-like repeat units follow at residues 50–75 (IPSQ…RNTQ), 98–123 (VRLQ…RDVC), 151–176 (VRLQ…RRET), 197–222 (IPLQ…RRET), 244–269 (IPSQ…RWEV), 285–310 (VRLQ…RNTT), and 330–355 (IPSQ…RDVK). The segment at 175 to 194 (ETTKMTDSKHPDYDHERPDQ) is disordered. The interval 230–256 (HPEYDPESSIDSSTIPSQMGSNKYASQ) is disordered. Residues 238–256 (SIDSSTIPSQMGSNKYASQ) show a composition bias toward polar residues. The disordered stretch occupies residues 331–352 (PSQAGWNRGDSQKGMTGFGAPR).

This sequence belongs to the calponin family. In terms of tissue distribution, found in the longitudinal muscles below the hypodermis.

Its function is as follows. Could be involved in muscle contraction. This chain is Calponin homolog OV9M, found in Onchocerca volvulus.